The following is a 341-amino-acid chain: tRNA N6-adenosine threonylcarbamoyltransferase (341 aa).

2 residues coordinate Fe cation: His111 and His115. Residues 134 to 138 (LVSGG), Asp167, Gly180, and Asn276 contribute to the substrate site. Asp304 provides a ligand contact to Fe cation.

Belongs to the KAE1 / TsaD family. Requires Fe(2+) as cofactor.

It is found in the cytoplasm. The catalysed reaction is L-threonylcarbamoyladenylate + adenosine(37) in tRNA = N(6)-L-threonylcarbamoyladenosine(37) in tRNA + AMP + H(+). Its function is as follows. Required for the formation of a threonylcarbamoyl group on adenosine at position 37 (t(6)A37) in tRNAs that read codons beginning with adenine. Is involved in the transfer of the threonylcarbamoyl moiety of threonylcarbamoyl-AMP (TC-AMP) to the N6 group of A37, together with TsaE and TsaB. TsaD likely plays a direct catalytic role in this reaction. This Pseudomonas aeruginosa (strain LESB58) protein is tRNA N6-adenosine threonylcarbamoyltransferase.